The sequence spans 372 residues: MAAPQHTLADFVTDQWQRRSWFTWLMWPLSLLFGLIARIRRYGYQQGWFKSTRLPMPVIVVGNVTVGGTGKTPAVIALAHALAEAGLRPGVVSRGYGVKLNHPRRVKPTSKAADVGDEPLLIARAADVPVWVFPDRALCTQAMLVSHPGVNVLLLDDGLQHYKLQRDFEIVMFDTRMGGNGMMLPAGPLREPLTRPRDATLINDPNFRATPDKPDVYGMRLELDEAWQLNDPTMSCDVSKFADKRVLAAAGIGHPERFFASLRQAGLSPATLPLPDHYDFVQDPFADNPAALEADVILITEKDAVKCERFDDPRIWVVPTTPVIDAGLIDKIRRVVQARNPAIATPVTVGQSTATGMADGLDKEHQDGQPAA.

An ATP-binding site is contributed by 65 to 72; sequence TVGGTGKT. A disordered region spans residues 351-372; that stretch reads QSTATGMADGLDKEHQDGQPAA. A compositionally biased stretch (basic and acidic residues) spans 360–372; sequence GLDKEHQDGQPAA.

This sequence belongs to the LpxK family.

The enzyme catalyses a lipid A disaccharide + ATP = a lipid IVA + ADP + H(+). Its pathway is glycolipid biosynthesis; lipid IV(A) biosynthesis; lipid IV(A) from (3R)-3-hydroxytetradecanoyl-[acyl-carrier-protein] and UDP-N-acetyl-alpha-D-glucosamine: step 6/6. Transfers the gamma-phosphate of ATP to the 4'-position of a tetraacyldisaccharide 1-phosphate intermediate (termed DS-1-P) to form tetraacyldisaccharide 1,4'-bis-phosphate (lipid IVA). This chain is Tetraacyldisaccharide 4'-kinase, found in Cupriavidus metallidurans (strain ATCC 43123 / DSM 2839 / NBRC 102507 / CH34) (Ralstonia metallidurans).